Consider the following 414-residue polypeptide: Tyrosine--tRNA ligase (414 aa).

Tyrosine 38 contributes to the L-tyrosine binding site. The short motif at 43-52 is the 'HIGH' region element; that stretch reads CTARSLHIGS. L-tyrosine-binding residues include tyrosine 172 and glutamine 176. The 'KMSKS' region motif lies at 232 to 236; sequence KMGKT. Residue lysine 235 participates in ATP binding. Residues 345–412 form the S4 RNA-binding domain; sequence ISVAKLLQLA…GKKRRIKVVV (68 aa).

The protein belongs to the class-I aminoacyl-tRNA synthetase family. TyrS type 1 subfamily. In terms of assembly, homodimer.

It localises to the cytoplasm. The enzyme catalyses tRNA(Tyr) + L-tyrosine + ATP = L-tyrosyl-tRNA(Tyr) + AMP + diphosphate + H(+). Catalyzes the attachment of tyrosine to tRNA(Tyr) in a two-step reaction: tyrosine is first activated by ATP to form Tyr-AMP and then transferred to the acceptor end of tRNA(Tyr). The chain is Tyrosine--tRNA ligase from Anaplasma marginale (strain St. Maries).